The following is a 314-amino-acid chain: Diisopropyl-fluorophosphatase (314 aa).

Ca(2+) contacts are provided by Glu-21, Asn-120, Asn-175, Asp-229, Asp-232, Leu-273, and His-274. Residue His-287 is the Proton acceptor of the active site.

Monomer. Ca(2+) is required as a cofactor.

It carries out the reaction diisopropyl fluorophosphate + H2O = diisopropyl phosphate + fluoride + 2 H(+). Its activity is regulated as follows. Inhibited by chelating agents. Its function is as follows. Biological function and substrate unknown. However, it is capable of acting on phosphorus anhydride bonds (such as phosphorus-halide and phosphorus-cyanide) in organophosphorus compounds (including nerve gases). The protein is Diisopropyl-fluorophosphatase of Loligo vulgaris (Common European squid).